We begin with the raw amino-acid sequence, 320 residues long: mRNA decay activator protein ZFP36 (320 aa).

The necessary for nuclear export stretch occupies residues 1–15; sequence MDLSAIYESLMSMSH. A necessary and sufficient for the association with mRNA decay enzymes and mRNA decay activation region spans residues 1–93; that stretch reads MDLSAIYESL…PTSPTATPTT (93 aa). Necessary for localization of ARE-containing mRNAs to processing bodies (PBs) stretches follow at residues 1–167 and 93–320; these read MDLS…DLAL and TSSR…SVSE. Residues 17 to 50 form a disordered region; the sequence is LSPDHGGTESSGGLWNINSSDSIPSGVTSRLTGR. Residues 27–50 are compositionally biased toward polar residues; it reads SGGLWNINSSDSIPSGVTSRLTGR. Ser-53 is subject to Phosphoserine; by MAPKAPK2. A Phosphoserine modification is found at Ser-59. The stretch at 64–68 is one P-P-P-P-G repeat; it reads PPPPG. Positions 66–85 are enriched in pro residues; it reads PPGFAPLAPRPGPELSPSPT. The interval 66–95 is disordered; the sequence is PPGFAPLAPRPGPELSPSPTSPTATPTTSS. Residues Ser-81 and Ser-83 each carry the phosphoserine modification. Phosphothreonine is present on Thr-85. Ser-86 is modified (phosphoserine). The segment covering 86-95 has biased composition (low complexity); sequence SPTATPTTSS. The interval 88 to 161 is necessary for nuclear localization; it reads TATPTTSSRY…GSRCHFIHNP (74 aa). The interval 90–166 is necessary for RNA-binding; it reads TPTTSSRYKT…FIHNPTEDLA (77 aa). 2 C3H1-type zinc fingers span residues 96–124 and 134–162; these read RYKT…HGPG and KYKT…HNPT. Residues 96–187 are necessary for interaction with PABPN1; sequence RYKTELCRTY…ISFSGLPSGR (92 aa). The interval 167–320 is necessary for mRNA decay activation; the sequence is LPGQPHVLRQ…PIFNRISVSE (154 aa). Position 179 is a phosphoserine; by MAPKAPK2 (Ser-179). The interval 180-310 is disordered; that stretch reads FSGLPSGRRT…PQPPAPPRRL (131 aa). Position 190 is a phosphoserine (Ser-190). One copy of the P-P-P-P-G repeat lies at 191–195; it reads PPPPG. The segment covering 197 to 209 has biased composition (low complexity); sequence SGPSLSSCSFSPS. At Ser-211 the chain carries Phosphoserine. A P-P-P-P-G repeat occupies 212–216; it reads PPPPG. Ser-221 is modified (phosphoserine; by MAPK1; in vitro). A Phosphothreonine modification is found at Thr-251. Phosphoserine is present on residues Ser-270 and Ser-290. Low complexity predominate over residues 280 to 290; the sequence is SSGSSLGGSDS. Residues 300 to 309 show a composition bias toward pro residues; the sequence is PPQPPAPPRR. Positions 306–320 are interaction with CNOT1; that stretch reads PPRRLPIFNRISVSE. Ser-317 is subject to Phosphoserine.

As to quaternary structure, associates with cytoplasmic CCR4-NOT and PAN2-PAN3 deadenylase complexes to trigger ARE-containing mRNA deadenylation and decay processes. Part of a mRNA decay activation complex at least composed of poly(A)-specific exoribonucleases CNOT6, EXOSC2 and XRN1 and mRNA-decapping enzymes DCP1A and DCP2. Associates with the RNA exosome complex. Interacts (via phosphorylated form) with 14-3-3 proteins; these interactions promote exclusion of ZFP36 from cytoplasmic stress granules in response to arsenite treatment in a MAPKAPK2-dependent manner and does not prevent CCR4-NOT deadenylase complex recruitment or ZFP36-induced ARE-containing mRNA deadenylation and decay processes. Interacts with 14-3-3 proteins; these interactions occur in response to rapamycin in an Akt-dependent manner. Interacts with AGO2 and AGO4. Interacts (via C-terminus) with CNOT1; this interaction occurs in a RNA-independent manner and induces mRNA deadenylation. Interacts (via N-terminus) with CNOT6. Interacts with CNOT6L. Interacts (via C-terminus) with CNOT7; this interaction occurs in a RNA-independent manner, induces mRNA deadenylation and is inhibited in a phosphorylation MAPKAPK2-dependent manner. Interacts (via unphosphorylated form) with CNOT8; this interaction occurs in a RNA-independent manner and is inhibited in a phosphorylation MAPKAPK2-dependent manner. Interacts with DCP1A. Interacts (via N-terminus) with DCP2. Interacts with EDC3. Interacts (via N-terminus) with EXOSC2. Interacts with heat shock 70 kDa proteins. Interacts with KHSRP; this interaction increases upon cytokine-induced treatment. Interacts with MAP3K4; this interaction enhances the association with SH3KBP1/CIN85. Interacts with MAPKAPK2; this interaction occurs upon skeletal muscle satellite cell activation. Interacts with NCL. Interacts with NUP214; this interaction increases upon lipopolysaccharide (LPS) stimulation. Interacts with PABPC1; this interaction occurs in a RNA-dependent manner. Interacts (via hypophosphorylated form) with PABPN1 (via RRM domain and C-terminal arginine-rich region); this interaction occurs in the nucleus in a RNA-independent manner, decreases in presence of single-stranded poly(A) RNA-oligomer and in a p38 MAPK-dependent-manner and inhibits nuclear poly(A) tail synthesis. Interacts with PAN2. Interacts (via C3H1-type zinc finger domains) with PKM. Interacts (via C3H1-type zinc finger domains) with nuclear RNA poly(A) polymerase. Interacts with PPP2CA; this interaction occurs in LPS-stimulated cells and induces ZFP36 dephosphorylation, and hence may promote ARE-containing mRNAs decay. Interacts (via C-terminus) with PRR5L (via C-terminus); this interaction may accelerate ZFP36-mediated mRNA decay during stress. Interacts (via C-terminus) with SFN; this interaction occurs in a phosphorylation-dependent manner. Interacts (via extreme C-terminal region) with SH3KBP1/CIN85 (via SH3 domains); this interaction enhances MAP3K4-induced phosphorylation of ZFP36 at Ser-59 and Ser-86 and does not alter neither ZFP36 binding to ARE-containing transcripts nor TNF-alpha mRNA decay. Interacts with XRN1. Interacts (via C-terminus and Ser-179 phosphorylated form) with YWHAB; this interaction occurs in a p38/MAPKAPK2-dependent manner, increases cytoplasmic localization of ZFP36 and protects ZFP36 from Ser-179 dephosphorylation by serine/threonine phosphatase 2A, and hence may be crucial for stabilizing ARE-containing mRNAs. Interacts (via phosphorylated form) with YWHAE. Interacts (via C-terminus) with YWHAG; this interaction occurs in a phosphorylation-dependent manner. Interacts with YWHAH; this interaction occurs in a phosphorylation-dependent manner. Interacts with YWHAQ; this interaction occurs in a phosphorylation-dependent manner. Interacts with (via C-terminus) YWHAZ; this interaction occurs in a phosphorylation-dependent manner. Does not interact with SH3KBP1. Interacts (via P-P-P-P-G repeats) with GIGYF2; the interaction is direct. Post-translationally, phosphorylated. Phosphorylation at serine and/or threonine residues occurs in a p38 MAPK- and MAPKAPK2-dependent manner. Phosphorylated by MAPKAPK2 at Ser-53 and Ser-179; phosphorylation increases its stability and cytoplasmic localization, promotes binding to 14-3-3 adapter proteins and inhibits the recruitment of cytoplasmic CCR4-NOT and PAN2-PAN3 deadenylase complexes to the mRNA decay machinery, thereby inhibiting ZFP36-induced ARE-containing mRNA deadenylation and decay processes. Phosphorylation by MAPKAPK2 does not impair ARE-containing RNA-binding. Phosphorylated in a MAPKAPK2- and p38 MAPK-dependent manner upon skeletal muscle satellite cell activation; this phosphorylation inhibits ZFP36-mediated mRNA decay activity, and hence stabilizes MYOD1 mRNA. Phosphorylated by MAPK1 upon mitogen stimulation. Phosphorylated at Ser-59 and Ser-86; these phosphorylations increase in a SH3KBP1-dependent manner. Phosphorylated at serine and threonine residues in a pyruvate kinase PKM- and p38 MAPK-dependent manner. Phosphorylation at Ser-53 may participate in the PKM-mediated degradation of ZFP36 in a p38 MAPK-dependent manner. Dephosphorylated by serine/threonine phosphatase 2A at Ser-179. In terms of processing, ubiquitinated; pyruvate kinase (PKM)-dependent ubiquitination leads to proteasomal degradation through a p38 MAPK signaling pathway.

It localises to the nucleus. The protein resides in the cytoplasm. It is found in the cytoplasmic granule. Its subcellular location is the P-body. Its function is as follows. Zinc-finger RNA-binding protein that destabilizes numerous cytoplasmic AU-rich element (ARE)-containing mRNA transcripts by promoting their poly(A) tail removal or deadenylation, and hence provide a mechanism for attenuating protein synthesis. Acts as an 3'-untranslated region (UTR) ARE mRNA-binding adapter protein to communicate signaling events to the mRNA decay machinery. Recruits deadenylase CNOT7 (and probably the CCR4-NOT complex) via association with CNOT1, and hence promotes ARE-mediated mRNA deadenylation. Also functions by recruiting components of the cytoplasmic RNA decay machinery to the bound ARE-containing mRNAs. Self regulates by destabilizing its own mRNA. Binds to 3'-UTR ARE of numerous mRNAs. Also binds to ARE of its own mRNA. Plays a role in anti-inflammatory responses; suppresses tumor necrosis factor (TNF)-alpha production by stimulating ARE-mediated TNF-alpha mRNA decay and several other inflammatory ARE-containing mRNAs in interferon (IFN)- and/or lipopolysaccharide (LPS)-induced macrophages. Also plays a role in the regulation of dendritic cell maturation at the post-transcriptional level, and hence operates as part of a negative feedback loop to limit the inflammatory response. Promotes ARE-mediated mRNA decay of hypoxia-inducible factor HIF1A mRNA during the response of endothelial cells to hypoxia. Positively regulates early adipogenesis of preadipocytes by promoting ARE-mediated mRNA decay of immediate early genes (IEGs). Negatively regulates hematopoietic/erythroid cell differentiation by promoting ARE-mediated mRNA decay of the transcription factor STAT5B mRNA. Plays a role in maintaining skeletal muscle satellite cell quiescence by promoting ARE-mediated mRNA decay of the myogenic determination factor MYOD1 mRNA. Also associates with and regulates the expression of non-ARE-containing target mRNAs at the post-transcriptional level, such as MHC class I mRNAs. Participates in association with argonaute RISC catalytic components in the ARE-mediated mRNA decay mechanism; assists microRNA (miRNA) targeting ARE-containing mRNAs. May also play a role in the regulation of cytoplasmic mRNA decapping; enhances decapping of ARE-containing RNAs, in vitro. Involved in the delivery of target ARE-mRNAs to processing bodies (PBs). In addition to its cytosolic mRNA-decay function, affects nuclear pre-mRNA processing. Negatively regulates nuclear poly(A)-binding protein PABPN1-stimulated polyadenylation activity on ARE-containing pre-mRNA during LPS-stimulated macrophages. Also involved in the regulation of stress granule (SG) and P-body (PB) formation and fusion. Plays a role in the regulation of keratinocyte proliferation, differentiation and apoptosis. Plays a role as a tumor suppressor by inhibiting cell proliferation in breast cancer cells. This Rattus norvegicus (Rat) protein is mRNA decay activator protein ZFP36.